The chain runs to 174 residues: MKTLLLTIGFSLIAILQAQDTPALGKDTVAVSGKWYLKAMTADQEVPEKPDSVTPMILKAQKGGNLEAKITMLTNGQCQNITVVLHKTSEPGKYTAYEGQRVVFIQPSPVRDHYILYCEGELHGRQIRMAKLLGRDPEQSQEALEDFREFSRAKGLNQEILELAQSETCSPGGQ.

The N-terminal stretch at 1–18 is a signal peptide; that stretch reads MKTLLLTIGFSLIAILQA. C78 and C169 form a disulfide bridge. N80 carries an N-linked (GlcNAc...) asparagine glycan.

Belongs to the calycin superfamily. Lipocalin family. As to expression, tongue epithelial tissue.

Its subcellular location is the secreted. In Canis lupus familiaris (Dog), this protein is Major allergen Can f 1.